The chain runs to 172 residues: Mitochondrial import inner membrane translocase subunit Tim17-B (172 aa).

A disulfide bridge links cysteine 9 with cysteine 78. 3 consecutive transmembrane segments (helical) span residues 17–37 (CGGA…IKGF), 61–77 (QIGG…STID), and 113–133 (VGSA…GILL). The interval 147 to 172 (FLEDPSQLTPKEGSPAPGYPNYQQYH) is disordered.

This sequence belongs to the Tim17/Tim22/Tim23 family. As to quaternary structure, component of the TIM23 complex at least composed of TIMM23, TIMM17 (TIMM17A or TIMM17B) and TIMM50. The complex interacts with the TIMM44 component of the PAM complex. The complex also interacts with DNAJC15.

Its subcellular location is the mitochondrion inner membrane. Its function is as follows. Essential component of the TIM23 complex, a complex that mediates the translocation of transit peptide-containing proteins across the mitochondrial inner membrane. The chain is Mitochondrial import inner membrane translocase subunit Tim17-B (Timm17b) from Mus musculus (Mouse).